The following is a 259-amino-acid chain: Triosephosphate isomerase (259 aa).

10–12 (NWK) is a substrate binding site. The active-site Electrophile is the His102. Catalysis depends on Glu172, which acts as the Proton acceptor. Substrate-binding positions include Gly178, Ser218, and 239–240 (GG).

Belongs to the triosephosphate isomerase family. As to quaternary structure, homodimer.

It is found in the cytoplasm. It carries out the reaction D-glyceraldehyde 3-phosphate = dihydroxyacetone phosphate. Its pathway is carbohydrate biosynthesis; gluconeogenesis. The protein operates within carbohydrate degradation; glycolysis; D-glyceraldehyde 3-phosphate from glycerone phosphate: step 1/1. In terms of biological role, involved in the gluconeogenesis. Catalyzes stereospecifically the conversion of dihydroxyacetone phosphate (DHAP) to D-glyceraldehyde-3-phosphate (G3P). The protein is Triosephosphate isomerase of Leifsonia xyli subsp. xyli (strain CTCB07).